Reading from the N-terminus, the 150-residue chain is uncharacterized protein (150 aa).

The protein belongs to the aspartate/glutamate racemases family.

This is an uncharacterized protein from Pectobacterium carotovorum subsp. carotovorum (Erwinia carotovora subsp. carotovora).